The following is a 430-amino-acid chain: MGKHEFLTPKAIANRIKAKGLQKLRWYCQMCQKQCRDENGFKCHCMSESHQRQMQVFGQAPDRVVEGFSEEFLDAFLTLLRRAHRHSRIAATVVYNEFIADRHHVHMNSTRWATLTEFVKFLGREGHCKVEDTPKGWFITYIDRDSEQAVKARLKRKRIKSDLAEDERQERMIARQIERAQQSMGKTNGELGDDASPDGSEGESGSADEYSDSENDHEGQEEDAKEANKAAGKIAIALQRAVPGPKVNPLDDKPKVKFGFEEEDEVSARDKEKEELAKKKGKDAINAAEARRSALDELMKEEEKAKERSNRKDYWLCPGIVVKVMSKSLAEKGYCKQKGVVKRVIDKYVGEIEMLESKHVLRVDQDELETVIPQIGGLVRIVNGAYRGSNARLLSVDTERFCAKVQVEKGLYDGKVLKAIEYEDICKIFH.

The segment at 28 to 50 adopts a C2H2-type zinc-finger fold; it reads CQMCQKQCRDENGFKCHCMSESH. The interval 51–160 is winged helix-turn-helix (wHTH); the sequence is QRQMQVFGQA…KARLKRKRIK (110 aa). A coiled-coil region spans residues 147–183; sequence EQAVKARLKRKRIKSDLAEDERQERMIARQIERAQQS. Residues 155 to 158 carry the Nuclear localization signal (NLS) motif; the sequence is KRKR. 2 disordered regions span residues 179-230 and 261-284; these read RAQQ…ANKA and EEED…GKDA. Residues 209–224 are compositionally biased toward acidic residues; sequence EYSDSENDHEGQEEDA. Residues 261–278 show a composition bias toward basic and acidic residues; that stretch reads EEEDEVSARDKEKEELAK. The stretch at 283–312 forms a coiled coil; it reads DAINAAEARRSALDELMKEEEKAKERSNRK. The segment at 319–370 is C-terminal subdomain A; that stretch reads GIVVKVMSKSLAEKGYCKQKGVVKRVIDKYVGEIEMLESKHVLRVDQDELET. Positions 376-427 are C-terminal subdomain B; sequence GGLVRIVNGAYRGSNARLLSVDTERFCAKVQVEKGLYDGKVLKAIEYEDICK.

Belongs to the KIN17 family.

Its subcellular location is the nucleus. This is KIN17-like protein from Oryza sativa subsp. indica (Rice).